The sequence spans 349 residues: 4-hydroxy-2-oxovalerate aldolase 2 (349 aa).

The region spanning 12–264 (VRMTDTSLRD…KTGIDFFDIA (253 aa)) is the Pyruvate carboxyltransferase domain. 20–21 (RD) is a binding site for substrate. Asp21 contributes to the Mn(2+) binding site. His24 acts as the Proton acceptor in catalysis. 2 residues coordinate substrate: Ser174 and His203. Residues His203 and His205 each contribute to the Mn(2+) site. Tyr294 serves as a coordination point for substrate.

This sequence belongs to the 4-hydroxy-2-oxovalerate aldolase family.

It carries out the reaction (S)-4-hydroxy-2-oxopentanoate = acetaldehyde + pyruvate. This is 4-hydroxy-2-oxovalerate aldolase 2 (bphI-2) from Mycolicibacterium smegmatis (strain ATCC 700084 / mc(2)155) (Mycobacterium smegmatis).